A 271-amino-acid polypeptide reads, in one-letter code: Calretinin (271 aa).

6 EF-hand domains span residues 16–51, 63–98, 107–142, 151–186, 195–230, and 235–270; these read LTASQFLEIWKHFDADGNGYIEGKELENFFQELEKA, NFGEKMKEFMQKYDKNSDGKIEMAELAQILPTEENF, GSSAEFMEAWRKYDTDRSGYIEANELKGFLSDLLKK, KLQEYTQTILRMFDLNGDGKLGLSEMSRLLPVQENF, LTSEEFNAIFTFYDKDGSGYIDENELDALLKDLYEK, and MNIQQLTTYRKSVMSLAEAGKLYRKDLEIVLCSEPP. Residues Asp-29, Asp-31, Asn-33, Tyr-35, Glu-40, Asp-76, Asn-78, Asp-80, Lys-82, Glu-87, Asp-120, Asp-122, Ser-124, Tyr-126, Glu-131, Asp-164, Asn-166, Asp-168, Lys-170, Glu-175, Asp-208, Asp-210, Ser-212, Tyr-214, and Glu-219 each contribute to the Ca(2+) site. Tyr-214 is subject to Phosphotyrosine.

It belongs to the calbindin family. Widely expressed in central nervous system. Expressed in type I unipolar brush cells of the cerebellum (at protein level).

The protein localises to the synapse. It localises to the cell projection. Its subcellular location is the dendrite. Calcium-binding protein involved in calcium homeostasis and signal transduction. It plays a critical role in buffering intracellular calcium levels and modulating calcium-dependent signaling pathways. Predominantly expressed in specific neuronal populations, influences synaptic plasticity and neuronal excitability, contributing to learning and memory. During embryonic development, it facilitates neuronal differentiation and maturation. This Mus musculus (Mouse) protein is Calretinin (Calb2).